The primary structure comprises 293 residues: Glutamine sensor pib2 (293 aa).

The segment at 38-75 (APTRQATNGTGSVSGSPNSSSNSTPANQGSLPSHTNPQ) is disordered. A compositionally biased stretch (low complexity) spans 44–62 (TNGTGSVSGSPNSSSNSTP). The segment covering 63-75 (ANQGSLPSHTNPQ) has biased composition (polar residues). The segment at 156 to 220 (DVSVCSFPSC…SCVSCFYEYL (65 aa)) adopts an FYVE-type; degenerate zinc-finger fold. The Zn(2+) site is built by cysteine 178, cysteine 181, cysteine 212, and cysteine 215. Polar residues predominate over residues 242-256 (APQQATTHPPSQPKN). Residues 242–276 (APQQATTHPPSQPKNAVSVPIPKMDSTDSKGELPS) are disordered. Position 259 is a phosphoserine (serine 259).

Interacts with the TORC1 complex when activated by glutamine or cysteine.

It is found in the vacuole membrane. Its activity is regulated as follows. Activated by glutamine. In terms of biological role, functions as an intracellular glutamine sensor that directly activates the TORC1 signaling pathway, to promote cell growth when glutamine is available. In Schizosaccharomyces pombe (strain 972 / ATCC 24843) (Fission yeast), this protein is Glutamine sensor pib2.